We begin with the raw amino-acid sequence, 303 residues long: UDP-3-O-acyl-N-acetylglucosamine deacetylase (303 aa).

Zn(2+) is bound by residues histidine 78, histidine 237, and aspartate 241. The Proton donor role is filled by histidine 264.

It belongs to the LpxC family. The cofactor is Zn(2+).

It catalyses the reaction a UDP-3-O-[(3R)-3-hydroxyacyl]-N-acetyl-alpha-D-glucosamine + H2O = a UDP-3-O-[(3R)-3-hydroxyacyl]-alpha-D-glucosamine + acetate. It functions in the pathway glycolipid biosynthesis; lipid IV(A) biosynthesis; lipid IV(A) from (3R)-3-hydroxytetradecanoyl-[acyl-carrier-protein] and UDP-N-acetyl-alpha-D-glucosamine: step 2/6. Functionally, catalyzes the hydrolysis of UDP-3-O-myristoyl-N-acetylglucosamine to form UDP-3-O-myristoylglucosamine and acetate, the committed step in lipid A biosynthesis. In Pseudomonas fluorescens (strain ATCC BAA-477 / NRRL B-23932 / Pf-5), this protein is UDP-3-O-acyl-N-acetylglucosamine deacetylase.